Here is a 429-residue protein sequence, read N- to C-terminus: BURP domain-containing protein 3 (429 aa).

The N-terminal stretch at 1-21 (MDRLLACLLGFLLIASVGSHA) is a signal peptide. The interval 59–81 (GGGVHVDAGHGKPGGTTVDVGKG) is disordered. The BURP domain occupies 213–428 (FFLEKDLHPG…PQDHVVWTRS (216 aa)).

As to expression, expressed in stems, leaves, shoot, panicles and stamen.

The polypeptide is BURP domain-containing protein 3 (BURP3) (Oryza sativa subsp. japonica (Rice)).